Here is a 147-residue protein sequence, read N- to C-terminus: Probable WRKY transcription factor 45 (147 aa).

A disordered region spans residues 21 to 52 (TEFHGVDNSAQPTTSSEEKPRSKKKKKEREAR). Residues 59–124 (SQVDILDDGY…YQGVHTHAVD (66 aa)) constitute a DNA-binding region (WRKY). Positions 90, 95, 119, and 121 each coordinate Zn(2+).

Belongs to the WRKY group I family.

Its subcellular location is the nucleus. In terms of biological role, transcription factor. Interacts specifically with the W box (5'-(T)TGAC[CT]-3'), a frequently occurring elicitor-responsive cis-acting element. The sequence is that of Probable WRKY transcription factor 45 (WRKY45) from Arabidopsis thaliana (Mouse-ear cress).